The sequence spans 29 residues: Augerpeptide hheTx2 (29 aa).

Post-translationally, contains 4 disulfide bonds. As to expression, expressed by the venom duct.

Its subcellular location is the secreted. The protein is Augerpeptide hheTx2 of Hastula hectica (Sea snail).